The following is a 152-amino-acid chain: Erythema protein SVEP (152 aa).

The signal sequence occupies residues 1 to 18; the sequence is MSITQSFFVLTLAIFGAA.

As to expression, salivary gland (at protein level).

It is found in the secreted. In terms of biological role, salivary vasoactive peptide; induces vasodilatation in bioassay with rabbit aortic rings. In Simulium vittatum (Striped black fly), this protein is Erythema protein SVEP.